The following is a 120-amino-acid chain: Small ribosomal subunit protein uS13 (120 aa).

Residues 94–120 are disordered; sequence GLPLRGQRTRTNARTRKGPRKAIAGKK.

It belongs to the universal ribosomal protein uS13 family. In terms of assembly, part of the 30S ribosomal subunit. Forms a loose heterodimer with protein S19. Forms two bridges to the 50S subunit in the 70S ribosome.

Functionally, located at the top of the head of the 30S subunit, it contacts several helices of the 16S rRNA. In the 70S ribosome it contacts the 23S rRNA (bridge B1a) and protein L5 of the 50S subunit (bridge B1b), connecting the 2 subunits; these bridges are implicated in subunit movement. Contacts the tRNAs in the A and P-sites. This chain is Small ribosomal subunit protein uS13, found in Azoarcus sp. (strain BH72).